A 253-amino-acid polypeptide reads, in one-letter code: Maleate isomerase (253 aa).

Substrate contacts are provided by residues N14, 80–82, Y137, and N167; that span reads CLV. Residue C80 is the Nucleophile of the active site. C80 carries the S-(2-succinyl)cysteine modification. The active-site Proton donor is C198. Residue 199-200 coordinates substrate; it reads VQ.

It belongs to the maleate isomerase family. In terms of assembly, homodimer.

It catalyses the reaction maleate = fumarate. Catalyzes cis-trans isomerization of the C2-C3 double bond in maleate to yield fumarate. In Alcaligenes faecalis, this protein is Maleate isomerase.